The following is a 359-amino-acid chain: 3-dehydroquinate synthase (359 aa).

NAD(+)-binding positions include 71 to 76 (DGEQFK), 105 to 109 (GVIGD), 129 to 130 (TT), Lys-142, Lys-151, and 169 to 172 (CLQT). Residues Glu-184, His-247, and His-264 each coordinate Zn(2+).

It belongs to the sugar phosphate cyclases superfamily. Dehydroquinate synthase family. Requires Co(2+) as cofactor. The cofactor is Zn(2+). It depends on NAD(+) as a cofactor.

The protein resides in the cytoplasm. The enzyme catalyses 7-phospho-2-dehydro-3-deoxy-D-arabino-heptonate = 3-dehydroquinate + phosphate. It participates in metabolic intermediate biosynthesis; chorismate biosynthesis; chorismate from D-erythrose 4-phosphate and phosphoenolpyruvate: step 2/7. In terms of biological role, catalyzes the conversion of 3-deoxy-D-arabino-heptulosonate 7-phosphate (DAHP) to dehydroquinate (DHQ). In Shewanella sp. (strain MR-4), this protein is 3-dehydroquinate synthase.